The chain runs to 293 residues: ATP synthase gamma chain (293 aa).

This sequence belongs to the ATPase gamma chain family. As to quaternary structure, F-type ATPases have 2 components, CF(1) - the catalytic core - and CF(0) - the membrane proton channel. CF(1) has five subunits: alpha(3), beta(3), gamma(1), delta(1), epsilon(1). CF(0) has three main subunits: a, b and c.

The protein resides in the cell inner membrane. Its function is as follows. Produces ATP from ADP in the presence of a proton gradient across the membrane. The gamma chain is believed to be important in regulating ATPase activity and the flow of protons through the CF(0) complex. This chain is ATP synthase gamma chain, found in Sinorhizobium fredii (strain NBRC 101917 / NGR234).